The primary structure comprises 426 residues: Glutamate-1-semialdehyde 2,1-aminomutase (426 aa).

K265 carries the N6-(pyridoxal phosphate)lysine modification.

The protein belongs to the class-III pyridoxal-phosphate-dependent aminotransferase family. HemL subfamily. As to quaternary structure, homodimer. It depends on pyridoxal 5'-phosphate as a cofactor.

The protein resides in the cytoplasm. It carries out the reaction (S)-4-amino-5-oxopentanoate = 5-aminolevulinate. Its pathway is porphyrin-containing compound metabolism; protoporphyrin-IX biosynthesis; 5-aminolevulinate from L-glutamyl-tRNA(Glu): step 2/2. The chain is Glutamate-1-semialdehyde 2,1-aminomutase from Shigella boydii serotype 4 (strain Sb227).